The primary structure comprises 1073 residues: MGTGPGVSGRRAAARPSSELPSPDSQLLWVGGHAHSSDSQVCHHADCQQLHHRGPLNLCETCDSKFHSTLHYDGHVRFDLPPQGSVLARNVSTRSCPPRTSPAADLEEEEEGCTDGKGDRKSAGLKISKKKARRRHTDDPSKECFTLKFDLNVDIETEIVPAMKKKSLGEVLLPVFERKGIALGKVDIYLDQSNTPLSLTFEAYRFGGHYLRVKAKPGDEGKVEQGVKDSKSLSLPALRPSGAGPPVSERVDPQSRRESSLDILAPGRRRKNMSEFLGEAGIPGHEPPAPSSCSLPVGSSGGTSSGINESWKNRAASRFSGFFSSSPSTSAFSREVDKMEQLESKLHAYSLFGLPRMPRRLRFDHDSWEEEEEDDEEDEESSGLRLEDSWRELTDGHEKLTRRQCHQQEAVWELLHTEVSYIRKLRVITNLFLCCLLNLQESGLLCEVEAERLFSNIPEIAKLHRGLWGSVMVPVLEKARRTRALLQPSDFLKGFKMFGSLFKPYIRYCMEEEGCMEYMRGLLRDNDLFRAYVTWAEKHQQCQRLKLSDMLAKPHQRLTKYPLLLKSVLRKTDDPRTKEAIVTMISSVERFIHHVNTCMRQRQERQRLAGVVSRIDAYEVVEGSNDEVDKLLKEFLHLDLTAPMPGTSPEETRQLLLEGSLRMKEGKDSKMDVYCFLFTDLLLVTKAVKKAERTKVIRPPLLVDKIVCRELRDPGSFLLIYLNEFHSAVGAYTFQASSQALCRSWVDTIYNAQNQLQQLRAQLSAQEHPGSQHLQSLEEEEDEQEEEGEESGTSAASSPTILRKSSNSLDSEHCTSDGSTETLAMVVVEPGATLSSPEFEGGPVSSQSDESSLSNTASSVTPTSELLPLGPVDGRSCSMDSAYGTLSPTSLQDFVAPHPVVEPAPVPQTPSPQPSPRLRRRTPVQLLPRPPRLLKSKSEASLLQLLSGTPAARGVPPAPSRSLSELCLISVAPGVRTQRPLQEGGPGWNGPGMCDPCHGPQLSESENRPSHMTGGPADSARRRCREMPSGTMSRVQSEPPSGVSAQHRKLTLAQLYRIRTTLLLNSTLTASEV.

Disordered stretches follow at residues 1–28, 91–135, 217–261, 278–309, and 367–388; these read MGTG…SQLL, VSTR…ARRR, PGDE…ESSL, GEAG…GINE, and SWEE…RLED. Basic and acidic residues-rich tracts occupy residues 217–231 and 249–260; these read PGDE…KDSK and ERVDPQSRRESS. Residues 367–381 are compositionally biased toward acidic residues; sequence SWEEEEEDDEEDEES. The DH domain maps to 406–598; that stretch reads HQQEAVWELL…ERFIHHVNTC (193 aa). One can recognise a PH domain in the interval 654-754; that stretch reads QLLLEGSLRM…WVDTIYNAQN (101 aa). 3 disordered regions span residues 762-818, 833-873, and 899-925; these read QLSA…TSDG, TLSS…GPVD, and PVVE…TPVQ. Acidic residues predominate over residues 777 to 790; the sequence is LEEEEDEQEEEGEE. 2 stretches are compositionally biased toward polar residues: residues 791 to 809 and 844 to 864; these read SGTS…SNSL and VSSQ…TPTS. T793 carries the post-translational modification Phosphothreonine. S798 is modified (phosphoserine). Residues 900–915 show a composition bias toward pro residues; it reads VVEPAPVPQTPSPQPS. T909 carries the phosphothreonine modification. S911, S936, and S941 each carry phosphoserine. Positions 993-1046 are disordered; the sequence is MCDPCHGPQLSESENRPSHMTGGPADSARRRCREMPSGTMSRVQSEPPSGVSAQ. The span at 1030–1039 shows a compositional bias: polar residues; it reads GTMSRVQSEP.

In terms of assembly, interacts with GIPC1/synectin and RHOA. Expressed in neurons and glial cells of the peripheral nervous system, with highest levels of expression in the brain and sciatic nerve endoneurium. Isoform 2 is expressed at detectable levels only in malignant cells.

It is found in the cytoplasm. It localises to the perinuclear region. The protein resides in the cell membrane. Its subcellular location is the cell junction. The protein localises to the cell projection. It is found in the lamellipodium. Functions as a guanine exchange factor (GEF) for RAB26 and thus regulates autophagy of synaptic vesicles in axon terminal of motoneurons. Involved in the control of neuronal cell differentiation. Plays a role in angiogenesis through regulation of endothelial cells chemotaxis. Also affects the migration, adhesion, and matrix/bone degradation in macrophages and osteoclasts. This Mus musculus (Mouse) protein is Pleckstrin homology domain-containing family G member 5 (Plekhg5).